Here is a 239-residue protein sequence, read N- to C-terminus: MAKPKKSDEEVSIDSDSLKIKVAKEAAKLIKDEMVVGLGSGSTANLFIQELGKRVIEEELYIYGVPTSFDSRMMANQSGIPLISLDQCGEIDIAIDGADEIDKKTFSLIKGGGGCHTMEKIVDYYAKEFVVLADESKMVDSLGENTPVPLEVIPFSYSTVLSKLLKINAAPAIRSGSGKMGPVITDNGNMIIDVFINIEDAEETETMLNSIPGVLENGIFTKCDKVLIGTSKKVEVLKK.

Residues 40-43, 96-99, and 110-113 each bind substrate; these read SGST, DGAD, and KGGG. Glutamate 119 functions as the Proton acceptor in the catalytic mechanism. Lysine 137 contributes to the substrate binding site.

The protein belongs to the ribose 5-phosphate isomerase family. As to quaternary structure, homodimer.

It carries out the reaction aldehydo-D-ribose 5-phosphate = D-ribulose 5-phosphate. The protein operates within carbohydrate degradation; pentose phosphate pathway; D-ribose 5-phosphate from D-ribulose 5-phosphate (non-oxidative stage): step 1/1. Catalyzes the reversible conversion of ribose-5-phosphate to ribulose 5-phosphate. The sequence is that of Ribose-5-phosphate isomerase A from Methanococcus vannielii (strain ATCC 35089 / DSM 1224 / JCM 13029 / OCM 148 / SB).